A 154-amino-acid chain; its full sequence is Lipoprotein signal peptidase (154 aa).

Helical transmembrane passes span 55-75 (GHMW…IYIM) and 84-104 (LFSI…IDRV). Active-site residues include Asp-111 and Asp-129. A helical membrane pass occupies residues 124–144 (IFNVADASLSVGVVLMLVYVF).

This sequence belongs to the peptidase A8 family.

The protein resides in the cell membrane. The enzyme catalyses Release of signal peptides from bacterial membrane prolipoproteins. Hydrolyzes -Xaa-Yaa-Zaa-|-(S,diacylglyceryl)Cys-, in which Xaa is hydrophobic (preferably Leu), and Yaa (Ala or Ser) and Zaa (Gly or Ala) have small, neutral side chains.. It participates in protein modification; lipoprotein biosynthesis (signal peptide cleavage). Functionally, this protein specifically catalyzes the removal of signal peptides from prolipoproteins. This Listeria welshimeri serovar 6b (strain ATCC 35897 / DSM 20650 / CCUG 15529 / CIP 8149 / NCTC 11857 / SLCC 5334 / V8) protein is Lipoprotein signal peptidase.